Here is a 97-residue protein sequence, read N- to C-terminus: YcgL domain-containing protein PMI1171 (97 aa).

A YcgL domain is found at 3–87 (MICAIYRSTK…PVESMLNAYL (85 aa)).

The polypeptide is YcgL domain-containing protein PMI1171 (Proteus mirabilis (strain HI4320)).